The primary structure comprises 172 residues: Large ribosomal subunit protein uL10 (172 aa).

Belongs to the universal ribosomal protein uL10 family. As to quaternary structure, part of the ribosomal stalk of the 50S ribosomal subunit. The N-terminus interacts with L11 and the large rRNA to form the base of the stalk. The C-terminus forms an elongated spine to which L12 dimers bind in a sequential fashion forming a multimeric L10(L12)X complex.

Forms part of the ribosomal stalk, playing a central role in the interaction of the ribosome with GTP-bound translation factors. This chain is Large ribosomal subunit protein uL10, found in Francisella tularensis subsp. holarctica (strain FTNF002-00 / FTA).